The primary structure comprises 815 residues: Bifunctional aspartokinase/homoserine dehydrogenase (815 aa).

The segment at 1–249 (MRVLKFGGTS…VPDARLLPTL (249 aa)) is aspartokinase. The segment at 250 to 470 (SYREAMELSY…NNKKVVDMFL (221 aa)) is interface. 2 consecutive ACT domains span residues 320 to 392 (VSGP…PIEV) and 401 to 478 (VVGD…GVGG). The tract at residues 471-815 (VGVGGVGGEL…FADILRTLQH (345 aa)) is homoserine dehydrogenase. NAD(+) contacts are provided by Val-473, Gly-475, Val-476, Ala-504, and Thr-555. Val-476 serves as a coordination point for NADP(+). Val-476 is an NADPH binding site. NADP(+) is bound at residue Thr-555. Residues Thr-555, Ser-556, and Lys-579 each coordinate NADPH. Lys-579 provides a ligand contact to NADP(+). Positions 606, 609, 611, and 613 each coordinate Na(+). Gly-664 and Glu-667 together coordinate NADP(+). L-homoserine-binding residues include Glu-667 and Asp-678. The active-site Proton donor is the Lys-682. Position 797 (Gly-797) interacts with NAD(+). Residue Gly-797 participates in NADP(+) binding. Residue Gly-797 coordinates NADPH.

It in the N-terminal section; belongs to the aspartokinase family. The protein in the C-terminal section; belongs to the homoserine dehydrogenase family. Homotetramer. The cofactor is a metal cation.

The catalysed reaction is L-homoserine + NADP(+) = L-aspartate 4-semialdehyde + NADPH + H(+). It catalyses the reaction L-homoserine + NAD(+) = L-aspartate 4-semialdehyde + NADH + H(+). The enzyme catalyses L-aspartate + ATP = 4-phospho-L-aspartate + ADP. Its pathway is amino-acid biosynthesis; L-lysine biosynthesis via DAP pathway; (S)-tetrahydrodipicolinate from L-aspartate: step 1/4. It functions in the pathway amino-acid biosynthesis; L-methionine biosynthesis via de novo pathway; L-homoserine from L-aspartate: step 1/3. It participates in amino-acid biosynthesis; L-methionine biosynthesis via de novo pathway; L-homoserine from L-aspartate: step 3/3. The protein operates within amino-acid biosynthesis; L-threonine biosynthesis; L-threonine from L-aspartate: step 1/5. Its pathway is amino-acid biosynthesis; L-threonine biosynthesis; L-threonine from L-aspartate: step 3/5. Its function is as follows. Bifunctional aspartate kinase and homoserine dehydrogenase that catalyzes the first and the third steps toward the synthesis of lysine, methionine and threonine from aspartate. The protein is Bifunctional aspartokinase/homoserine dehydrogenase (thrA) of Haemophilus influenzae (strain ATCC 51907 / DSM 11121 / KW20 / Rd).